The sequence spans 199 residues: ATP-dependent Clp protease proteolytic subunit (199 aa).

Ser-99 functions as the Nucleophile in the catalytic mechanism. Residue His-124 is part of the active site.

This sequence belongs to the peptidase S14 family. Fourteen ClpP subunits assemble into 2 heptameric rings which stack back to back to give a disk-like structure with a central cavity, resembling the structure of eukaryotic proteasomes.

It localises to the cytoplasm. The enzyme catalyses Hydrolysis of proteins to small peptides in the presence of ATP and magnesium. alpha-casein is the usual test substrate. In the absence of ATP, only oligopeptides shorter than five residues are hydrolyzed (such as succinyl-Leu-Tyr-|-NHMec, and Leu-Tyr-Leu-|-Tyr-Trp, in which cleavage of the -Tyr-|-Leu- and -Tyr-|-Trp bonds also occurs).. Its function is as follows. Cleaves peptides in various proteins in a process that requires ATP hydrolysis. Has a chymotrypsin-like activity. Plays a major role in the degradation of misfolded proteins. This Lactococcus lactis subsp. cremoris (strain SK11) protein is ATP-dependent Clp protease proteolytic subunit.